Reading from the N-terminus, the 358-residue chain is Protein ocs (358 aa).

The protein belongs to the lysopine/nopaline/octopine/opine/vitopine dehydrogenases family. Monomer.

The enzyme catalyses D-octopine + NAD(+) + H2O = L-arginine + pyruvate + NADH + H(+). It catalyses the reaction D-lysopine + NADP(+) + H2O = L-lysine + pyruvate + NADPH + H(+). Reductive condensation of pyruvate and arginine, lysine, histidine, or octopine to form octopine, lysopine, histopine, or octopinic acid, respectively. NADPH is the preferred cofactor, but NADH can also be used. This chain is Protein ocs (ocs), found in Agrobacterium tumefaciens (strain Ach5).